Reading from the N-terminus, the 154-residue chain is Ribosome maturation factor RimP (154 aa).

The protein belongs to the RimP family.

The protein localises to the cytoplasm. Functionally, required for maturation of 30S ribosomal subunits. The sequence is that of Ribosome maturation factor RimP from Alkaliphilus oremlandii (strain OhILAs) (Clostridium oremlandii (strain OhILAs)).